Consider the following 941-residue polypeptide: MNKKKKPFLGMPAPLGYVPGLGRGATGFTTRSDIGPARDANDPVDDRHAPPGKRTVGDQMKKNQAADDDDEDLNDTNYDEFNGYAGSLFSSGPYEKDDEEADAIYAALDKRMDERRKERREQREKEEIEKYRMERPKIQQQFSDLKRKLAEVTEEEWLSIPEVGDARNKRQRNPRYEKLTPVPDSFFAKHLQTGENHTSVDPRQTQFGGLNTPYPGGLNTPYPGGMTPGLMTPGTGELDMRKIGQARNTLMDMRLSQVSDSVSGQTVVDPKGYLTDLNSMIPTHGGDINDIKKARLLLKSVRETNPHHPPAWIASARLEEVTGKLQVARNLIMKGTEMCPKSEDVWLEAARLQPGDTAKAVVAQAVRHLPQSVRIYIRAAELETDIRAKKRVLRKALEHVPNSVRLWKAAVELEEPEDARIMLSRAVECCPTSVELWLALARLETYENARKVLNKARENIPTDRHIWITAAKLEEANGNTQMVEKIIDRAITSLRANGVEINREQWIQDAEECDRAGSVATCQAVMRAVIGIGIEEEDRKHTWMEDADSCVAHNALECARAIYAYALQVFPSKKSVWLRAAYFEKNHGTRESLEALLQRAVAHCPKAEVLWLMGAKSKWLAGDVPAARSILALAFQANPNSEEIWLAAVKLESENNEYERARRLLAKARSSAPTARVFMKSVKLEWVLGNISAAQELCEEALRHYEDFPKLWMMKGQIEEQGELMEKAREAYNQGLKKCPHSTPLWLLLSRLEEKIGQLTRARAILEKSRLKNPKNPGLWLESVRLEYRAGLKNIANTLMAKALQECPNSGILWSEAVFLEARPQRKTKSVDALKKCEHDPHVLLAVAKLFWSERKITKAREWFHRTVKIDSDLGDAWAFFYKFELQHGTEEQQEEVRKRCENAEPRHGELWCAVSKDITNWQRKIGEILVLVAARIKNTF.

The interval 1–79 (MNKKKKPFLG…DEDLNDTNYD (79 aa)) is disordered. Positions 39–65 (DANDPVDDRHAPPGKRTVGDQMKKNQA) are enriched in basic and acidic residues. The span at 66–78 (ADDDDEDLNDTNY) shows a compositional bias: acidic residues. At Ser-143 the chain carries Phosphoserine. Thr-180, Thr-266, and Thr-275 each carry phosphothreonine. Ser-279 bears the Phosphoserine mark. 9 HAT repeats span residues 384–416 (TDIR…LEEP), 418–444 (DARI…ARLE), 445–476 (TYEN…LEEA), 554–586 (NALE…FEKN), 588–620 (GTRE…SKWL), 622–654 (GDVP…LESE), 689–721 (GNIS…IEEQ), 723–755 (ELME…LEEK), and 855–887 (RKIT…FELQ).

Identified in the spliceosome B complex. Identified in the spliceosome C complex. Associates with the U5 snRNP particle. Component of the U4/U6-U5 tri-snRNP complex composed of the U4, U6 and U5 snRNAs and at least PRPF3, PRPF4, PRPF6, PRPF8, PRPF31, SNRNP200, TXNL4A, SNRNP40, DDX23, CD2BP2, PPIH, SNU13, EFTUD2, SART1 and USP39, LSm proteins LSm2-8 and Sm proteins. Interacts with ARAF1. Interacts with AR and NR3C1, but not ESR1, independently of the presence of hormones. Interacts with USH1G. Phosphorylated by PRP4K during spliceosome assembly.

The protein resides in the nucleus. The protein localises to the nucleoplasm. Its subcellular location is the nucleus speckle. Involved in pre-mRNA splicing as component of the U4/U6-U5 tri-snRNP complex, one of the building blocks of the spliceosome. Enhances dihydrotestosterone-induced transactivation activity of AR, as well as dexamethasone-induced transactivation activity of NR3C1, but does not affect estrogen-induced transactivation. In Mus musculus (Mouse), this protein is Pre-mRNA-processing factor 6 (Prpf6).